Consider the following 144-residue polypeptide: 3-hydroxyacyl-[acyl-carrier-protein] dehydratase FabZ (144 aa).

Residue His-48 is part of the active site.

Belongs to the thioester dehydratase family. FabZ subfamily.

The protein localises to the cytoplasm. The catalysed reaction is a (3R)-hydroxyacyl-[ACP] = a (2E)-enoyl-[ACP] + H2O. In terms of biological role, involved in unsaturated fatty acids biosynthesis. Catalyzes the dehydration of short chain beta-hydroxyacyl-ACPs and long chain saturated and unsaturated beta-hydroxyacyl-ACPs. This is 3-hydroxyacyl-[acyl-carrier-protein] dehydratase FabZ from Bacillus anthracis (strain A0248).